The primary structure comprises 322 residues: MPTIQDERNLMVFSGNANKPLTQSICKELGVRMGKSLVSRFSDGEEQVEIEESVRRQEVFVVQPTCAPSAENLMELLVIIDALKRASVSSVTAVIPYFGYSRQDRRMRSLRVPITAKVAAKMISAIGADRVLTIDLHADQIQGFFDVPVDNVYASPLLLADIWRAYGTDNLIVVSPDVGGVVRARAMAKRLGDTDLAIIDKRRPRANVATVMNIIGEVNGKTCVLVDDLVDTAGTLCAAAVALKQNGATKVVAYITHPVLSGPAVDNINNSELDELVVTDTIPLSDAARECRKIRQLSVAELLAETIRRIAFGESVSSLYVD.

Residues 43-45 (DGE) and 102-103 (RQ) contribute to the ATP site. The Mg(2+) site is built by His137 and Asp177. Lys201 is a catalytic residue. D-ribose 5-phosphate contacts are provided by residues Arg203, Asp227, and 231 to 235 (DTAGT).

The protein belongs to the ribose-phosphate pyrophosphokinase family. Class I subfamily. As to quaternary structure, homohexamer. Mg(2+) serves as cofactor.

The protein resides in the cytoplasm. It catalyses the reaction D-ribose 5-phosphate + ATP = 5-phospho-alpha-D-ribose 1-diphosphate + AMP + H(+). It functions in the pathway metabolic intermediate biosynthesis; 5-phospho-alpha-D-ribose 1-diphosphate biosynthesis; 5-phospho-alpha-D-ribose 1-diphosphate from D-ribose 5-phosphate (route I): step 1/1. Involved in the biosynthesis of the central metabolite phospho-alpha-D-ribosyl-1-pyrophosphate (PRPP) via the transfer of pyrophosphoryl group from ATP to 1-hydroxyl of ribose-5-phosphate (Rib-5-P). This chain is Ribose-phosphate pyrophosphokinase, found in Xylella fastidiosa (strain 9a5c).